Reading from the N-terminus, the 194-residue chain is NADH-quinone oxidoreductase subunit B (194 aa).

The disordered stretch occupies residues 1–26 (MGLTPSATKPEIAQAPQGIVDPSTGR). Positions 73, 74, 138, and 168 each coordinate [4Fe-4S] cluster.

The protein belongs to the complex I 20 kDa subunit family. As to quaternary structure, NDH-1 is composed of 14 different subunits. Subunits NuoB, C, D, E, F, and G constitute the peripheral sector of the complex. [4Fe-4S] cluster serves as cofactor.

It localises to the cell inner membrane. It carries out the reaction a quinone + NADH + 5 H(+)(in) = a quinol + NAD(+) + 4 H(+)(out). Its function is as follows. NDH-1 shuttles electrons from NADH, via FMN and iron-sulfur (Fe-S) centers, to quinones in the respiratory chain. The immediate electron acceptor for the enzyme in this species is believed to be ubiquinone. Couples the redox reaction to proton translocation (for every two electrons transferred, four hydrogen ions are translocated across the cytoplasmic membrane), and thus conserves the redox energy in a proton gradient. This chain is NADH-quinone oxidoreductase subunit B, found in Xanthobacter autotrophicus (strain ATCC BAA-1158 / Py2).